The sequence spans 363 residues: 3-isopropylmalate dehydrogenase (363 aa).

79–92 contacts NAD(+); it reads GPKWEHLPPNEQPE. Substrate is bound by residues Arg-100, Arg-110, Arg-139, and Asp-228. 3 residues coordinate Mg(2+): Asp-228, Asp-252, and Asp-256. Position 286-298 (286-298) interacts with NAD(+); that stretch reads GSAPDIAGKNIAN.

Belongs to the isocitrate and isopropylmalate dehydrogenases family. LeuB type 1 subfamily. As to quaternary structure, homodimer. Mg(2+) serves as cofactor. Requires Mn(2+) as cofactor.

Its subcellular location is the cytoplasm. The catalysed reaction is (2R,3S)-3-isopropylmalate + NAD(+) = 4-methyl-2-oxopentanoate + CO2 + NADH. It participates in amino-acid biosynthesis; L-leucine biosynthesis; L-leucine from 3-methyl-2-oxobutanoate: step 3/4. Its function is as follows. Catalyzes the oxidation of 3-carboxy-2-hydroxy-4-methylpentanoate (3-isopropylmalate) to 3-carboxy-4-methyl-2-oxopentanoate. The product decarboxylates to 4-methyl-2 oxopentanoate. This is 3-isopropylmalate dehydrogenase from Vibrio cholerae serotype O1 (strain ATCC 39315 / El Tor Inaba N16961).